Reading from the N-terminus, the 320-residue chain is Acetyl-coenzyme A carboxylase carboxyl transferase subunit alpha (320 aa).

The CoA carboxyltransferase C-terminal domain occupies 42–295 (IGDKAAQALK…GDAIAEAFND (254 aa)).

Belongs to the AccA family. In terms of assembly, acetyl-CoA carboxylase is a heterohexamer composed of biotin carboxyl carrier protein (AccB), biotin carboxylase (AccC) and two subunits each of ACCase subunit alpha (AccA) and ACCase subunit beta (AccD).

Its subcellular location is the cytoplasm. The enzyme catalyses N(6)-carboxybiotinyl-L-lysyl-[protein] + acetyl-CoA = N(6)-biotinyl-L-lysyl-[protein] + malonyl-CoA. It functions in the pathway lipid metabolism; malonyl-CoA biosynthesis; malonyl-CoA from acetyl-CoA: step 1/1. Component of the acetyl coenzyme A carboxylase (ACC) complex. First, biotin carboxylase catalyzes the carboxylation of biotin on its carrier protein (BCCP) and then the CO(2) group is transferred by the carboxyltransferase to acetyl-CoA to form malonyl-CoA. The chain is Acetyl-coenzyme A carboxylase carboxyl transferase subunit alpha from Nitrobacter hamburgensis (strain DSM 10229 / NCIMB 13809 / X14).